Here is a 208-residue protein sequence, read N- to C-terminus: GTP-binding protein YPTM1 (208 aa).

Residues 15–23 (GDSSVGKSC), 33–40 (YVDSYIST), 63–67 (DTAGQ), 121–124 (NKCD), and 151–153 (SAK) each bind GTP. Residues 37–45 (YISTIGVDF) carry the Effector region motif. Positions 189 to 208 (QMKGRPIQQEQQKSSRCCST) are disordered. A compositionally biased stretch (polar residues) spans 196–208 (QQEQQKSSRCCST). Residues cysteine 205 and cysteine 206 are each lipidated (S-geranylgeranyl cysteine).

It belongs to the small GTPase superfamily. Rab family. In terms of tissue distribution, low levels in coleoptiles.

The protein localises to the cell membrane. Its function is as follows. Protein transport. Probably involved in vesicular traffic. This Zea mays (Maize) protein is GTP-binding protein YPTM1 (YPTM1).